We begin with the raw amino-acid sequence, 554 residues long: Hydroxylamine reductase (554 aa).

Residues C3, C6, C18, and C25 each contribute to the [2Fe-2S] cluster site. The hybrid [4Fe-2O-2S] cluster site is built by H252, E276, C320, C408, C436, C461, E495, and K497. A Cysteine persulfide modification is found at C408.

Belongs to the HCP family. [2Fe-2S] cluster serves as cofactor. Requires hybrid [4Fe-2O-2S] cluster as cofactor.

It localises to the cytoplasm. The catalysed reaction is A + NH4(+) + H2O = hydroxylamine + AH2 + H(+). Its function is as follows. Catalyzes the reduction of hydroxylamine to form NH(3) and H(2)O. This Shewanella oneidensis (strain ATCC 700550 / JCM 31522 / CIP 106686 / LMG 19005 / NCIMB 14063 / MR-1) protein is Hydroxylamine reductase.